The following is a 387-amino-acid chain: Ferrochelatase (387 aa).

Residues His196 and Glu277 each coordinate Fe cation.

Belongs to the ferrochelatase family.

The protein localises to the cytoplasm. It carries out the reaction heme b + 2 H(+) = protoporphyrin IX + Fe(2+). Its pathway is porphyrin-containing compound metabolism; protoheme biosynthesis; protoheme from protoporphyrin-IX: step 1/1. Catalyzes the ferrous insertion into protoporphyrin IX. The sequence is that of Ferrochelatase from Trichodesmium erythraeum (strain IMS101).